A 92-amino-acid polypeptide reads, in one-letter code: MKKILVACGTGMSTSTMIAHKLQEFLTEQGISATTAQCCLNEIPLNCNGMDLIVTSMRTNSDYGIPTLNGAALLTGINDDALKQQIKALLTQ.

In terms of domain architecture, PTS EIIB type-2 spans 1-92 (MKKILVACGT…KQQIKALLTQ (92 aa)). The active-site Phosphocysteine intermediate is the C8.

Its subcellular location is the cytoplasm. Functionally, the phosphoenolpyruvate-dependent sugar phosphotransferase system (sugar PTS), a major carbohydrate active -transport system, catalyzes the phosphorylation of incoming sugar substrates concomitantly with their translocation across the cell membrane. The protein is Putative phosphotransferase enzyme IIB component SgcB (sgcB) of Escherichia coli (strain K12).